We begin with the raw amino-acid sequence, 257 residues long: Small ribosomal subunit protein uS2 (257 aa).

This sequence belongs to the universal ribosomal protein uS2 family.

In Bartonella quintana (strain Toulouse) (Rochalimaea quintana), this protein is Small ribosomal subunit protein uS2.